We begin with the raw amino-acid sequence, 94 residues long: MMIESVAISVKESMPPQVSVEINGMLNDGCTAFHEAKQSIDGNTIKIEVTTIRPKDAMCNQQISPFSTIIQIEGELKPGEYTILVNDVAEALKL.

Could be a silencing control element for the regulation of the restriction system. This is an uncharacterized protein from Herpetosiphon aurantiacus (Herpetosiphon giganteus).